A 155-amino-acid chain; its full sequence is Endoribonuclease YbeY (155 aa).

The segment at 64-84 is disordered; it reads SFPMDEMRAPGDDEDPPSGLL. Zn(2+) contacts are provided by His-115, His-119, and His-125.

The protein belongs to the endoribonuclease YbeY family. The cofactor is Zn(2+).

It is found in the cytoplasm. Its function is as follows. Single strand-specific metallo-endoribonuclease involved in late-stage 70S ribosome quality control and in maturation of the 3' terminus of the 16S rRNA. The protein is Endoribonuclease YbeY of Cutibacterium acnes (strain DSM 16379 / KPA171202) (Propionibacterium acnes).